A 436-amino-acid polypeptide reads, in one-letter code: MDVEQEDAIKGWKIRRLIEYLEKAKGNGTSLISLIIPPKEQISLINQKLTDAHGRAQNIKSKAVQKAVQDAIISTKQKLSVIKQIPPNGLILYCGKFIGEDEKTEKQILEVLEPLRAINTTFFLCENTFYTQPLRDMLQEQDKFGFIIMDGNGSLFGTLQGNAREILHKFDVDLPKKHGRGGQSALRFARLRLEKRHNYMKKVAEVAINCFIQNDRVNVLGIVLAGAAEFKNELAANEYLDQRIRAKVVTIIDVNYGGENGFNQAIELSQVQLQNVKFIKEKNLITKLFEEVAQNSITVCYGLTDTMKALEMGAVETLVIWENLEFIWFKLKNPVTKEESTVVLSPQQATEKNHFQDEANQCELNIVERFALTEWLIDNYKNYGARLEFVTDRSQEGSQFVKGFGGICGFLRYEVNFEKMEFQEEEGYLDPDEDFL.

This sequence belongs to the eukaryotic release factor 1 family. Heterodimer of two subunits, one of which binds GTP.

It is found in the cytoplasm. Functionally, directs the termination of nascent peptide synthesis (translation) in response to the termination codon UGA. In L.striatus UAA and UAG codes for glutamine. The polypeptide is Eukaryotic peptide chain release factor subunit 1 (eRF1) (Loxodes striatus).